The following is a 663-amino-acid chain: MIDRKDTNRFKLVSKYSPSGDQPQAIETLVDNIEGGEKAQILKGATGTGKTYTMSQVIAQVNKPTLVIAHNKTLAGQLYGEFKEFFPDNAVEYFVSYYDYYQPEAYVPSSDTYIEKDSSVNDEIDKLRHSATSSLLERNDVIVVASVSCIYGLGSPKEYADSVVSLRPGQEISRDQLLNNLVDIQFERNDIDFQRGKFRVRGDVVEVFPASRDEHAFRIEFFGDEIDRIREIESLTGRVLGEVEHLAIFPATHFMTNDEHMEEAISKIQAEMENQVELFEKEGKLIEAQRIRQRTEYDIEMLREMGYTNGVENYSRHMDGRSEGEPPFTLLDFFPEDFLIMIDESHMTMGQIKGMYNGDRSRKEMLVNYGFRLPSALDNRPLRREEFESHVHQIVYVSATPGDYEMEQTDTVVEQIIRPTGLLDPEVEVRPSMGQMDDLLGEINLRTEKGERTFITTLTKRMAEDLTDYLKEMGVKVKYMHSDIKTLERTEIIRDLRLGVFDVLIGINLLREGIDVPEVSLVAILDADKEGFLRNERGLIQTIGRAARNSNGHVIMYADKITDSMQRAMDETARRRRLQMDYNEKHGIVPQTIKKEIRDLIAITKSNDSDKPEKVVDYSSLSKKERQAEIKALQQQMQEAAELLDFELAAQIRDVILELKAID.

In terms of domain architecture, Helicase ATP-binding spans 31 to 418; that stretch reads DNIEGGEKAQ…TDTVVEQIIR (388 aa). Residue 44-51 participates in ATP binding; that stretch reads GATGTGKT. The Beta-hairpin motif lies at 97–120; sequence YYDYYQPEAYVPSSDTYIEKDSSV. A Helicase C-terminal domain is found at 435 to 601; sequence QMDDLLGEIN…TIKKEIRDLI (167 aa). The UVR domain maps to 627-662; it reads QAEIKALQQQMQEAAELLDFELAAQIRDVILELKAI.

It belongs to the UvrB family. As to quaternary structure, forms a heterotetramer with UvrA during the search for lesions. Interacts with UvrC in an incision complex.

The protein resides in the cytoplasm. Functionally, the UvrABC repair system catalyzes the recognition and processing of DNA lesions. A damage recognition complex composed of 2 UvrA and 2 UvrB subunits scans DNA for abnormalities. Upon binding of the UvrA(2)B(2) complex to a putative damaged site, the DNA wraps around one UvrB monomer. DNA wrap is dependent on ATP binding by UvrB and probably causes local melting of the DNA helix, facilitating insertion of UvrB beta-hairpin between the DNA strands. Then UvrB probes one DNA strand for the presence of a lesion. If a lesion is found the UvrA subunits dissociate and the UvrB-DNA preincision complex is formed. This complex is subsequently bound by UvrC and the second UvrB is released. If no lesion is found, the DNA wraps around the other UvrB subunit that will check the other stand for damage. This chain is UvrABC system protein B, found in Streptococcus agalactiae serotype III (strain NEM316).